Here is a 404-residue protein sequence, read N- to C-terminus: Probable eukaryotic initiation factor 4A (404 aa).

The disordered stretch occupies residues 1-28 (MAQQGKVEPQDQDSFLDDQPGIRPIPSF). The Q motif motif lies at 26 to 54 (PSFDDMPLHQNLLRGIYSHGFEKPSSIQQ). Positions 57-231 (IVPFTRGGDI…KKFMRDPTRI (175 aa)) constitute a Helicase ATP-binding domain. 70-77 (AQSGTGKT) is a binding site for ATP. Positions 179–182 (DEAD) match the DEAD box motif. Positions 242–402 (GIKQFFIAVE…ELPVDFAAYL (161 aa)) constitute a Helicase C-terminal domain.

The protein belongs to the DEAD box helicase family. eIF4A subfamily. In terms of assembly, eIF4F is a multi-subunit complex, the composition of which varies with external and internal environmental conditions. It is composed of at least EIF4A, EIF4E and EIF4G.

It carries out the reaction ATP + H2O = ADP + phosphate + H(+). In terms of biological role, ATP-dependent RNA helicase which is a subunit of the eIF4F complex involved in cap recognition and is required for mRNA binding to ribosome. In the current model of translation initiation, eIF4A unwinds RNA secondary structures in the 5'-UTR of mRNAs which is necessary to allow efficient binding of the small ribosomal subunit, and subsequent scanning for the initiator codon. The protein is Probable eukaryotic initiation factor 4A of Trypanosoma brucei brucei (strain 927/4 GUTat10.1).